An 897-amino-acid chain; its full sequence is Probable bifunctional chitinase/lysozyme (897 aa).

The N-terminal stretch at 1–24 is a signal peptide; it reads MKLNIFTKSMIGMGLVCSALPALA. One can recognise a Chitin-binding type-3 1 domain in the interval 25–91; that stretch reads MEAWNNQQGG…SQFGNTLSCE (67 aa). Disordered regions lie at residues 90–127, 182–222, and 287–333; these read CEKS…SNSS, TEIS…PADK, and QYGN…DSVN. The span at 95–111 shows a compositional bias: low complexity; it reads SSSSSNSNTPASNTPAN. 2 stretches are compositionally biased toward polar residues: residues 113–127 and 182–197; these read GSAT…SNSS and TEIS…TSAP. Positions 128–194 constitute a Chitin-binding type-3 2 domain; sequence VVAWNKQQGG…SETSNPQSCT (67 aa). Residues 198 to 216 show a composition bias toward pro residues; the sequence is QPSPDVKPAPDVKPAPDVQ. A Chitin-binding type-3 3 domain is found at 229 to 295; the sequence is VVAWKGQEGS…SQYGNPGSCS (67 aa). Positions 309–318 are enriched in pro residues; sequence DPTPETPVTP. The segment covering 322–333 has biased composition (polar residues); it reads NSEPSTPADSVN. Chitin-binding type-3 domains follow at residues 337 to 403 and 459 to 529; these read LQAW…TTCE and AKAW…PQFN. The 292-residue stretch at 586-877 folds into the GH18 domain; sequence KHVYAPYVDF…TNLSPEFHGL (292 aa). The cysteines at positions 628 and 673 are disulfide-linked. Glu-700 serves as the catalytic Proton donor.

The protein belongs to the glycosyl hydrolase 18 family. Chitinase class II subfamily.

The protein resides in the periplasm. It carries out the reaction Random endo-hydrolysis of N-acetyl-beta-D-glucosaminide (1-&gt;4)-beta-linkages in chitin and chitodextrins.. It catalyses the reaction Hydrolysis of (1-&gt;4)-beta-linkages between N-acetylmuramic acid and N-acetyl-D-glucosamine residues in a peptidoglycan and between N-acetyl-D-glucosamine residues in chitodextrins.. Bifunctional enzyme with lysozyme/chitinase activity. The chain is Probable bifunctional chitinase/lysozyme (chiA) from Escherichia coli (strain K12).